Here is a 61-residue protein sequence, read N- to C-terminus: Large ribosomal subunit protein eL37 (61 aa).

Zn(2+) contacts are provided by cysteine 19, cysteine 22, cysteine 34, and cysteine 37. The C4-type zinc finger occupies 19 to 37; sequence CRRCGRNAYNVSKHYCAAC.

The protein belongs to the eukaryotic ribosomal protein eL37 family. The cofactor is Zn(2+).

Binds to the 23S rRNA. The polypeptide is Large ribosomal subunit protein eL37 (Saccharolobus islandicus (strain L.S.2.15 / Lassen #1) (Sulfolobus islandicus)).